A 21-amino-acid chain; its full sequence is Nigrocin-2HSa (21 aa).

Cys15 and Cys21 form a disulfide bridge.

Expressed by the skin glands.

It is found in the secreted. In terms of biological role, has antibacterial activity against the Gram-positive bacterium S.aureus ATCC 25923 (MIC=56 uM) and the Gram-negative bacterium E.coli ATCC 25726 (MIC=28 uM). This Odorrana hosii (Hose's rock frog) protein is Nigrocin-2HSa.